A 515-amino-acid chain; its full sequence is ATP synthase subunit alpha (515 aa).

ATP is bound at residue 169 to 176 (GDRQTGKT).

The protein belongs to the ATPase alpha/beta chains family. As to quaternary structure, F-type ATPases have 2 components, CF(1) - the catalytic core - and CF(0) - the membrane proton channel. CF(1) has five subunits: alpha(3), beta(3), gamma(1), delta(1), epsilon(1). CF(0) has three main subunits: a(1), b(2) and c(9-12). The alpha and beta chains form an alternating ring which encloses part of the gamma chain. CF(1) is attached to CF(0) by a central stalk formed by the gamma and epsilon chains, while a peripheral stalk is formed by the delta and b chains.

Its subcellular location is the cell inner membrane. The catalysed reaction is ATP + H2O + 4 H(+)(in) = ADP + phosphate + 5 H(+)(out). Its function is as follows. Produces ATP from ADP in the presence of a proton gradient across the membrane. The alpha chain is a regulatory subunit. The sequence is that of ATP synthase subunit alpha from Myxococcus xanthus.